Consider the following 679-residue polypeptide: Protein hook (679 aa).

One can recognise a Calponin-homology (CH) domain in the interval 6–123 (NEMYYSLLEW…RLLQLVLGCA (118 aa)). 2 coiled-coil regions span residues 135-437 (EIMC…LKCG) and 480-574 (QTAL…QEIL).

The protein belongs to the hook family. In terms of assembly, homodimer. Interacts with microtubules via its N-terminus.

It localises to the cytoplasm. It is found in the cytoskeleton. The protein resides in the endosome. The protein localises to the synapse. In terms of biological role, involved in endocytic trafficking by stabilizing organelles of the endocytic pathway. Probably acts as a cytoskeletal linker protein required to tether endosome vesicles to the cytoskeleton. Involved in modulation of endocytosis at stages required for down-regulation of membrane proteins that control synapse size. Not involved in synaptic vesicle recycling. Required in R7 cells for boss endocytosis into multivesicular bodies (MVBs). Has a role in regulating adult longevity. This is Protein hook from Drosophila sechellia (Fruit fly).